A 279-amino-acid chain; its full sequence is Lactose operon transcription activator (279 aa).

The region spanning Gln174–His272 is the HTH araC/xylS-type domain. 2 consecutive DNA-binding regions (H-T-H motif) follow at residues Glu191–Leu212 and Ile239–Phe262.

Transcriptional regulator of the lacPH genes for lactose utilization. The sequence is that of Lactose operon transcription activator (lacR) from Staphylococcus xylosus.